The primary structure comprises 148 residues: Large ribosomal subunit protein bL9 (148 aa).

Belongs to the bacterial ribosomal protein bL9 family.

Binds to the 23S rRNA. The protein is Large ribosomal subunit protein bL9 of Staphylococcus epidermidis (strain ATCC 35984 / DSM 28319 / BCRC 17069 / CCUG 31568 / BM 3577 / RP62A).